An 874-amino-acid polypeptide reads, in one-letter code: DNA mismatch repair protein MutS (874 aa).

Position 630–637 (630–637 (GPNMAGKS)) interacts with ATP.

Belongs to the DNA mismatch repair MutS family.

Functionally, this protein is involved in the repair of mismatches in DNA. It is possible that it carries out the mismatch recognition step. This protein has a weak ATPase activity. In Chlorobium phaeovibrioides (strain DSM 265 / 1930) (Prosthecochloris vibrioformis (strain DSM 265)), this protein is DNA mismatch repair protein MutS.